The chain runs to 101 residues: Small ribosomal subunit protein uS10 (101 aa).

This sequence belongs to the universal ribosomal protein uS10 family. As to quaternary structure, part of the 30S ribosomal subunit.

Its function is as follows. Involved in the binding of tRNA to the ribosomes. The protein is Small ribosomal subunit protein uS10 of Corynebacterium urealyticum (strain ATCC 43042 / DSM 7109).